Here is a 155-residue protein sequence, read N- to C-terminus: Peptide methionine sulfoxide reductase MsrB (155 aa).

Positions 15 to 137 (REALIATLNA…NSVSLTFIPT (123 aa)) constitute a MsrB domain. Zn(2+) is bound by residues C54, C57, C103, and C106. The active-site Nucleophile is the C126.

The protein belongs to the MsrB Met sulfoxide reductase family. The cofactor is Zn(2+).

The enzyme catalyses L-methionyl-[protein] + [thioredoxin]-disulfide + H2O = L-methionyl-(R)-S-oxide-[protein] + [thioredoxin]-dithiol. The sequence is that of Peptide methionine sulfoxide reductase MsrB from Xylella fastidiosa (strain M23).